Reading from the N-terminus, the 371-residue chain is Alanine dehydrogenase (371 aa).

Residues Arg15 and Lys75 each contribute to the substrate site. The Proton donor/acceptor role is filled by His96. NAD(+)-binding positions include Ser134, 178 to 179 (TA), Asp198, Lys203, Ser220, 239 to 240 (VL), 267 to 270 (IAID), Arg279, and 298 to 301 (VANM). Catalysis depends on Asp270, which acts as the Proton donor/acceptor. Residues Glu323 and His327 each coordinate Mg(2+).

It belongs to the AlaDH/PNT family. As to quaternary structure, homohexamer. Trimer of dimers. It depends on Mg(2+) as a cofactor.

Its subcellular location is the secreted. It carries out the reaction L-alanine + NAD(+) + H2O = pyruvate + NH4(+) + NADH + H(+). It functions in the pathway amino-acid degradation; L-alanine degradation via dehydrogenase pathway; NH(3) and pyruvate from L-alanine: step 1/1. Inhibited by CuSO(4) and ZnCl(2). Functionally, catalyzes the reversible reductive amination of pyruvate to L-alanine. However, since the physiological environment of M.tuberculosis has a neutral pH, it can be assumed that the enzyme catalyzes exclusively the formation of L-alanine. May play a role in cell wall synthesis as L-alanine is an important constituent of the peptidoglycan layer. The sequence is that of Alanine dehydrogenase (ald) from Mycobacterium tuberculosis (strain ATCC 25618 / H37Rv).